The following is a 419-amino-acid chain: Gamma-glutamyl phosphate reductase (419 aa).

This sequence belongs to the gamma-glutamyl phosphate reductase family.

The protein localises to the cytoplasm. It catalyses the reaction L-glutamate 5-semialdehyde + phosphate + NADP(+) = L-glutamyl 5-phosphate + NADPH + H(+). It functions in the pathway amino-acid biosynthesis; L-proline biosynthesis; L-glutamate 5-semialdehyde from L-glutamate: step 2/2. Functionally, catalyzes the NADPH-dependent reduction of L-glutamate 5-phosphate into L-glutamate 5-semialdehyde and phosphate. The product spontaneously undergoes cyclization to form 1-pyrroline-5-carboxylate. The chain is Gamma-glutamyl phosphate reductase from Caulobacter sp. (strain K31).